The primary structure comprises 487 residues: UDP-N-acetylmuramoyl-L-alanyl-D-glutamate--2,6-diaminopimelate ligase (487 aa).

Leu23 and Ser25 together coordinate UDP-N-acetyl-alpha-D-muramoyl-L-alanyl-D-glutamate. 108 to 114 (GTNGKTS) is an ATP binding site. UDP-N-acetyl-alpha-D-muramoyl-L-alanyl-D-glutamate-binding positions include 150 to 151 (TT), Ser177, Gln183, and Arg185. Lys217 carries the post-translational modification N6-carboxylysine. Meso-2,6-diaminopimelate-binding positions include Arg378, 402–405 (DNPR), Gly453, and Glu457. The Meso-diaminopimelate recognition motif signature appears at 402–405 (DNPR).

The protein belongs to the MurCDEF family. MurE subfamily. It depends on Mg(2+) as a cofactor. Post-translationally, carboxylation is probably crucial for Mg(2+) binding and, consequently, for the gamma-phosphate positioning of ATP.

It localises to the cytoplasm. It catalyses the reaction UDP-N-acetyl-alpha-D-muramoyl-L-alanyl-D-glutamate + meso-2,6-diaminopimelate + ATP = UDP-N-acetyl-alpha-D-muramoyl-L-alanyl-gamma-D-glutamyl-meso-2,6-diaminopimelate + ADP + phosphate + H(+). The protein operates within cell wall biogenesis; peptidoglycan biosynthesis. Its function is as follows. Catalyzes the addition of meso-diaminopimelic acid to the nucleotide precursor UDP-N-acetylmuramoyl-L-alanyl-D-glutamate (UMAG) in the biosynthesis of bacterial cell-wall peptidoglycan. The chain is UDP-N-acetylmuramoyl-L-alanyl-D-glutamate--2,6-diaminopimelate ligase from Pseudomonas aeruginosa (strain ATCC 15692 / DSM 22644 / CIP 104116 / JCM 14847 / LMG 12228 / 1C / PRS 101 / PAO1).